A 150-amino-acid chain; its full sequence is MKSIEVHTDGSCLGNPGPGGWAALLRYNGREKELAGGEANSTNNRMELMAAIMALETLTEPCQILLHTDSQYVRQGITEWMPGWVRRGWKTSGGDPVKNRELWERLHAATQRHSIEWRWVKGHNGDPDNERVDVLARNQAIAQRGGLATS.

The RNase H type-1 domain maps to 1-141 (MKSIEVHTDG…VDVLARNQAI (141 aa)). 4 residues coordinate Mg(2+): aspartate 9, glutamate 47, aspartate 69, and aspartate 133.

The protein belongs to the RNase H family. As to quaternary structure, monomer. It depends on Mg(2+) as a cofactor.

Its subcellular location is the cytoplasm. The catalysed reaction is Endonucleolytic cleavage to 5'-phosphomonoester.. In terms of biological role, endonuclease that specifically degrades the RNA of RNA-DNA hybrids. This Xanthomonas campestris pv. campestris (strain 8004) protein is Ribonuclease H.